We begin with the raw amino-acid sequence, 105 residues long: DNA-directed RNA polymerase subunit omega (105 aa).

It belongs to the RNA polymerase subunit omega family. In terms of assembly, the RNAP catalytic core consists of 2 alpha, 1 beta, 1 beta' and 1 omega subunit. When a sigma factor is associated with the core the holoenzyme is formed, which can initiate transcription.

It carries out the reaction RNA(n) + a ribonucleoside 5'-triphosphate = RNA(n+1) + diphosphate. Promotes RNA polymerase assembly. Latches the N- and C-terminal regions of the beta' subunit thereby facilitating its interaction with the beta and alpha subunits. The polypeptide is DNA-directed RNA polymerase subunit omega (Streptococcus mutans serotype c (strain ATCC 700610 / UA159)).